The primary structure comprises 369 residues: Molybdenum import ATP-binding protein ModC (369 aa).

Residues 7–243 enclose the ABC transporter domain; sequence PGQAGIHARF…LDLPMAMTDD (237 aa). 41-48 is a binding site for ATP; sequence GQSGSGKT. A Mop domain is found at 304-369; the sequence is EGSILNVLAV…AQIKAVSLLA (66 aa).

The protein belongs to the ABC transporter superfamily. Molybdate importer (TC 3.A.1.8) family. As to quaternary structure, the complex is composed of two ATP-binding proteins (ModC), two transmembrane proteins (ModB) and a solute-binding protein (ModA).

It is found in the cell inner membrane. It catalyses the reaction molybdate(out) + ATP + H2O = molybdate(in) + ADP + phosphate + H(+). Functionally, part of the ABC transporter complex ModABC involved in molybdenum import. Responsible for energy coupling to the transport system. The chain is Molybdenum import ATP-binding protein ModC from Bordetella pertussis (strain Tohama I / ATCC BAA-589 / NCTC 13251).